The chain runs to 606 residues: Sulfite reductase [NADPH] flavoprotein alpha-component (606 aa).

The Flavodoxin-like domain maps to Val-64 to Val-202. Residues Ser-70–Ala-75, Ser-117–Gly-120, and Leu-153–Cys-162 contribute to the FMN site. Residues Gln-212–Thr-234 show a composition bias toward low complexity. The tract at residues Gln-212–Val-235 is disordered. Residues Thr-241–Pro-455 form the FAD-binding FR-type domain. FAD is bound by residues Thr-329, Lys-363, Arg-393–Ser-396, Thr-411–Gly-413, Tyr-417, and Gly-426–Ser-429. Residues Ser-526–Arg-527, Lys-532–Gln-536, and Asp-568 each bind NADP(+). Tyr-606 lines the FAD pocket.

Belongs to the NADPH-dependent sulphite reductase flavoprotein subunit CysJ family. It in the N-terminal section; belongs to the flavodoxin family. The protein in the C-terminal section; belongs to the flavoprotein pyridine nucleotide cytochrome reductase family. Alpha(8)-beta(8). The alpha component is a flavoprotein, the beta component is a hemoprotein. FAD is required as a cofactor. It depends on FMN as a cofactor.

The enzyme catalyses hydrogen sulfide + 3 NADP(+) + 3 H2O = sulfite + 3 NADPH + 4 H(+). It participates in sulfur metabolism; hydrogen sulfide biosynthesis; hydrogen sulfide from sulfite (NADPH route): step 1/1. Component of the sulfite reductase complex that catalyzes the 6-electron reduction of sulfite to sulfide. This is one of several activities required for the biosynthesis of L-cysteine from sulfate. The flavoprotein component catalyzes the electron flow from NADPH -&gt; FAD -&gt; FMN to the hemoprotein component. The sequence is that of Sulfite reductase [NADPH] flavoprotein alpha-component from Yersinia pestis bv. Antiqua (strain Antiqua).